The chain runs to 998 residues: 2-imino-3-(indol-3-yl)propanoate dimerase (998 aa).

It carries out the reaction 2 H2O2 = O2 + 2 H2O. It catalyses the reaction 2 2-iminio-3-(indol-3-yl)propanoate + H2O2 = indole-3-pyruvate imine dimer + 2 H2O. Its pathway is pigment biosynthesis; violacein biosynthesis. Functionally, catalyzes the hydrogen peroxide-dependent dimerization of two L-tryptophan-derived molecules (imine form of indole 3-pyruvate (IPA)), to form an uncharacterized product suggested to be indole-3-pyruvate imine dimer that can spontaneously convert into dichlorochromopyrrolate (CPA). The uncharacterized product is the substrate of VioE. In Chromobacterium violaceum (strain ATCC 12472 / DSM 30191 / JCM 1249 / CCUG 213 / NBRC 12614 / NCIMB 9131 / NCTC 9757 / MK), this protein is 2-imino-3-(indol-3-yl)propanoate dimerase (vioB).